Here is a 395-residue protein sequence, read N- to C-terminus: MANDYLFTSESVSEGHPDKVADQISDAILDAILAQDKYSRVAAETLCNTGLVVLAGEITTTANIDYIQIARDTIKRIGYDNTDYGIDYRGCAVLVAYDKQSPDIAQGVDRAHDNNLDQGAGDQGLMFGYACDETPELMPLPIHLSHRLVERQANLRRDGRLPWLRPDAKSQVTVRYVDGKPHSIDTVVLSTQHAPEIDLPALREAVIEEVIKPTLPADLIKGDIKFLVNPTGRFVIGGPQGDCGLTGRKIIVDTYGGAAPHGGGAFSGKDPSKVDRSAAYAGRYVAKNIVAAGLASRALIQVSYAIGVAEPTSVMVNTFGTGRVSDETITKLVREHFDLRPKGIIQMLDLLRPIYEKTAAYGHFGREEPEFSWEAADKALALAEAAGVEPAVQVA.

H16 provides a ligand contact to ATP. D18 provides a ligand contact to Mg(2+). E44 provides a ligand contact to K(+). Residues E57 and Q100 each contribute to the L-methionine site. The interval 100–110 (QSPDIAQGVDR) is flexible loop. Residues 167–169 (DAK), 233–234 (RF), D242, 248–249 (RK), A265, and K269 contribute to the ATP site. D242 contributes to the L-methionine binding site. K273 lines the L-methionine pocket.

This sequence belongs to the AdoMet synthase family. Homotetramer; dimer of dimers. It depends on Mg(2+) as a cofactor. Requires K(+) as cofactor.

It localises to the cytoplasm. It catalyses the reaction L-methionine + ATP + H2O = S-adenosyl-L-methionine + phosphate + diphosphate. It participates in amino-acid biosynthesis; S-adenosyl-L-methionine biosynthesis; S-adenosyl-L-methionine from L-methionine: step 1/1. In terms of biological role, catalyzes the formation of S-adenosylmethionine (AdoMet) from methionine and ATP. The overall synthetic reaction is composed of two sequential steps, AdoMet formation and the subsequent tripolyphosphate hydrolysis which occurs prior to release of AdoMet from the enzyme. The chain is S-adenosylmethionine synthase from Burkholderia mallei (strain NCTC 10247).